We begin with the raw amino-acid sequence, 132 residues long: Small ribosomal subunit protein uS8c (132 aa).

This sequence belongs to the universal ribosomal protein uS8 family. As to quaternary structure, part of the 30S ribosomal subunit.

The protein resides in the plastid. It is found in the chloroplast. Its function is as follows. One of the primary rRNA binding proteins, it binds directly to 16S rRNA central domain where it helps coordinate assembly of the platform of the 30S subunit. The chain is Small ribosomal subunit protein uS8c (rps8) from Guillardia theta (Cryptophyte).